We begin with the raw amino-acid sequence, 47 residues long: Large ribosomal subunit protein bL34 (47 aa).

The protein belongs to the bacterial ribosomal protein bL34 family.

This Mycobacterium sp. (strain JLS) protein is Large ribosomal subunit protein bL34.